The chain runs to 592 residues: Bifunctional purine biosynthesis protein ATIC (592 aa).

Residue Met1 is modified to N-acetylmethionine. Residues Ala2–Cys146 enclose the MGS-like domain. Residues Ala2 to Ser198 form an IMP cyclohydrolase region. IMP is bound by residues Ser12–Lys14, Ser34–Thr37, Arg64–Thr67, Cys101–Asn102, and Asp125–Ile126. Lys137 serves as the catalytic Proton donor/acceptor; for FAICAR cyclization activity. Residue Lys199 is modified to N6-acetyllysine. An AICAR formyltransferase region spans residues Lys199–His592. Residues Arg207–Tyr208, His267, Gly316, Asp339, Asn431, and Arg451 each bind 5-amino-1-(5-phospho-beta-D-ribosyl)imidazole-4-carboxamide. Catalysis depends on His267, which acts as the Proton acceptor; for AICAR formyltransferase activity. Ile452 serves as a coordination point for (6R)-10-formyltetrahydrofolate. Phe541 is a 5-amino-1-(5-phospho-beta-D-ribosyl)imidazole-4-carboxamide binding site. Residues Asp546 and Ser565–Ala566 contribute to the (6R)-10-formyltetrahydrofolate site. 5-amino-1-(5-phospho-beta-D-ribosyl)imidazole-4-carboxamide is bound at residue Arg588.

The protein belongs to the PurH family. In terms of assembly, homodimer. Associates with internalized INSR complexes on Golgi/endosomal membranes. Interacts with INSR; ATIC together with PRKAA2/AMPK2 and HACD3/PTPLAD1 is proposed to be part of a signaling network regulating INSR autophosphorylation and endocytosis. As to expression, present in the heart, brain, placenta, lung, liver, skeletal muscle, kidney, pancreas.

It localises to the cytoplasm. The protein resides in the cytosol. It catalyses the reaction (6R)-10-formyltetrahydrofolate + 5-amino-1-(5-phospho-beta-D-ribosyl)imidazole-4-carboxamide = 5-formamido-1-(5-phospho-D-ribosyl)imidazole-4-carboxamide + (6S)-5,6,7,8-tetrahydrofolate. The enzyme catalyses 10-formyldihydrofolate + 5-amino-1-(5-phospho-beta-D-ribosyl)imidazole-4-carboxamide = 5-formamido-1-(5-phospho-D-ribosyl)imidazole-4-carboxamide + 7,8-dihydrofolate. It carries out the reaction IMP + H2O = 5-formamido-1-(5-phospho-D-ribosyl)imidazole-4-carboxamide. The catalysed reaction is 5-amino-1-(5-phospho-D-ribosyl)imidazole-4-thiocarboxamide + 10-formyldihydrofolate = 6-thio-IMP + 7,8-dihydrofolate + H2O. The protein operates within purine metabolism; IMP biosynthesis via de novo pathway; 5-formamido-1-(5-phospho-D-ribosyl)imidazole-4-carboxamide from 5-amino-1-(5-phospho-D-ribosyl)imidazole-4-carboxamide (10-formyl THF route): step 1/1. It functions in the pathway purine metabolism; IMP biosynthesis via de novo pathway; IMP from 5-formamido-1-(5-phospho-D-ribosyl)imidazole-4-carboxamide: step 1/1. Its activity is regulated as follows. AMP and XMP inhibit AICAR formyltransferase activity. AICAR formyltransferase activity is inhibited by N-(6-fluoro-1-oxo-1,2-dihydroisoquinolin-7-yl)-5- [(3R)-3-hydroxypyrrolidin-1-yl]thiophene-2-sulfonamide (LSN 3213128), which acts as a tumor suppression in cancer cell lines. Bifunctional enzyme that catalyzes the last two steps of purine biosynthesis. Acts as a transformylase that incorporates a formyl group to the AMP analog AICAR (5-amino-1-(5-phospho-beta-D-ribosyl)imidazole-4-carboxamide) to produce the intermediate formyl-AICAR (FAICAR). Can use both 10-formyldihydrofolate and 10-formyltetrahydrofolate as the formyl donor in this reaction. Also catalyzes the cyclization of FAICAR to inosine monophosphate (IMP). Is able to convert thio-AICAR to 6-mercaptopurine ribonucleotide, an inhibitor of purine biosynthesis used in the treatment of human leukemias. Promotes insulin receptor/INSR autophosphorylation and is involved in INSR internalization. The chain is Bifunctional purine biosynthesis protein ATIC from Homo sapiens (Human).